The chain runs to 159 residues: Phosphopantetheine adenylyltransferase (159 aa).

Position 10 (Thr10) interacts with substrate. ATP contacts are provided by residues 10 to 11 and His18; that span reads TF. Residues Lys42, Met74, and Arg88 each coordinate substrate. ATP-binding positions include 89-91, Glu99, and 124-130; these read GLR and WSFISSS.

The protein belongs to the bacterial CoaD family. As to quaternary structure, homohexamer. Requires Mg(2+) as cofactor.

Its subcellular location is the cytoplasm. It catalyses the reaction (R)-4'-phosphopantetheine + ATP + H(+) = 3'-dephospho-CoA + diphosphate. It participates in cofactor biosynthesis; coenzyme A biosynthesis; CoA from (R)-pantothenate: step 4/5. In terms of biological role, reversibly transfers an adenylyl group from ATP to 4'-phosphopantetheine, yielding dephospho-CoA (dPCoA) and pyrophosphate. The sequence is that of Phosphopantetheine adenylyltransferase from Yersinia pseudotuberculosis serotype O:3 (strain YPIII).